Reading from the N-terminus, the 68-residue chain is Erythrodihydroneopterin triphosphate synthetase (68 aa).

A Phosphoserine modification is found at Ser-66.

This Cavia porcellus (Guinea pig) protein is Erythrodihydroneopterin triphosphate synthetase.